Consider the following 157-residue polypeptide: 6,7-dimethyl-8-ribityllumazine synthase (157 aa).

Residues phenylalanine 22, 56 to 58, and 80 to 82 contribute to the 5-amino-6-(D-ribitylamino)uracil site; these read AME and AVV. Position 85–86 (85–86) interacts with (2S)-2-hydroxy-3-oxobutyl phosphate; it reads ET. The active-site Proton donor is the histidine 88. A 5-amino-6-(D-ribitylamino)uracil-binding site is contributed by phenylalanine 113. Arginine 127 serves as a coordination point for (2S)-2-hydroxy-3-oxobutyl phosphate.

It belongs to the DMRL synthase family.

The enzyme catalyses (2S)-2-hydroxy-3-oxobutyl phosphate + 5-amino-6-(D-ribitylamino)uracil = 6,7-dimethyl-8-(1-D-ribityl)lumazine + phosphate + 2 H2O + H(+). The protein operates within cofactor biosynthesis; riboflavin biosynthesis; riboflavin from 2-hydroxy-3-oxobutyl phosphate and 5-amino-6-(D-ribitylamino)uracil: step 1/2. Catalyzes the formation of 6,7-dimethyl-8-ribityllumazine by condensation of 5-amino-6-(D-ribitylamino)uracil with 3,4-dihydroxy-2-butanone 4-phosphate. This is the penultimate step in the biosynthesis of riboflavin. The protein is 6,7-dimethyl-8-ribityllumazine synthase of Levilactobacillus brevis (strain ATCC 367 / BCRC 12310 / CIP 105137 / JCM 1170 / LMG 11437 / NCIMB 947 / NCTC 947) (Lactobacillus brevis).